We begin with the raw amino-acid sequence, 182 residues long: IQ domain-containing protein F1 (182 aa).

Basic and acidic residues-rich tracts occupy residues 1–10 (MGEEQQKPEE) and 31–43 (ETEKAKSKKKQEL). A disordered region spans residues 1 to 43 (MGEEQQKPEELNAPTDDAPQEKQQPADLSSETEKAKSKKKQEL). IQ domains are found at residues 45-74 (EKDQVVKIQAWWRGTLVRRSLLHAALSAWI) and 101-130 (EQWAVVRLQSWIRMWRIRRRYCRLLKAVRT).

In terms of assembly, interacts with calmodulin. As to expression, specifically expressed in testes and mature spermatozoa (at protein level).

It is found in the cytoplasmic vesicle. Its subcellular location is the secretory vesicle. It localises to the acrosome. Its function is as follows. Involved in sperm capacitation and acrosome reaction. The sequence is that of IQ domain-containing protein F1 from Mus musculus (Mouse).